The chain runs to 261 residues: Cytochrome c oxidase subunit 3 (261 aa).

Over 1–15 (MTHQTHAYHMVNPSP) the chain is Mitochondrial matrix. The helical transmembrane segment at 16–34 (WPLTGALSALLMTSGLVMW) threads the bilayer. Topologically, residues 35–40 (FHYNST) are mitochondrial intermembrane. A helical transmembrane segment spans residues 41–66 (LLLTLGLTTNLLTMYQWWRDIIREST). The Mitochondrial matrix segment spans residues 67 to 72 (FQGHHT). The helical transmembrane segment at 73–105 (PAVQKGLRYGMILFIISEVFFFSGFFWAFYHSS) threads the bilayer. At 106–128 (LAPTPELGGCWPPTGIHPLNPME) the chain is on the mitochondrial intermembrane side. Residues 129 to 152 (VPLLNTSVLLASGVSITWAHHSLM) traverse the membrane as a helical segment. The Mitochondrial matrix segment spans residues 153-155 (EGN). The chain crosses the membrane as a helical span at residues 156 to 183 (RKHMLQALFITISLGIYFTLLQASEYYE). Residues 184–190 (APFTISD) are Mitochondrial intermembrane-facing. A helical membrane pass occupies residues 191–223 (GVYGSTFFVATGFHGLHVIIGSTFLIVCFLRQL). The Mitochondrial matrix portion of the chain corresponds to 224 to 232 (KFHFTSNHH). Residues 233-256 (FGFEAAAWYWHFVDVVWLFLYVSI) form a helical membrane-spanning segment. Residues 257–261 (YWWGS) lie on the Mitochondrial intermembrane side of the membrane.

It belongs to the cytochrome c oxidase subunit 3 family. Component of the cytochrome c oxidase (complex IV, CIV), a multisubunit enzyme composed of 14 subunits. The complex is composed of a catalytic core of 3 subunits MT-CO1, MT-CO2 and MT-CO3, encoded in the mitochondrial DNA, and 11 supernumerary subunits COX4I, COX5A, COX5B, COX6A, COX6B, COX6C, COX7A, COX7B, COX7C, COX8 and NDUFA4, which are encoded in the nuclear genome. The complex exists as a monomer or a dimer and forms supercomplexes (SCs) in the inner mitochondrial membrane with NADH-ubiquinone oxidoreductase (complex I, CI) and ubiquinol-cytochrome c oxidoreductase (cytochrome b-c1 complex, complex III, CIII), resulting in different assemblies (supercomplex SCI(1)III(2)IV(1) and megacomplex MCI(2)III(2)IV(2)).

It localises to the mitochondrion inner membrane. The catalysed reaction is 4 Fe(II)-[cytochrome c] + O2 + 8 H(+)(in) = 4 Fe(III)-[cytochrome c] + 2 H2O + 4 H(+)(out). Component of the cytochrome c oxidase, the last enzyme in the mitochondrial electron transport chain which drives oxidative phosphorylation. The respiratory chain contains 3 multisubunit complexes succinate dehydrogenase (complex II, CII), ubiquinol-cytochrome c oxidoreductase (cytochrome b-c1 complex, complex III, CIII) and cytochrome c oxidase (complex IV, CIV), that cooperate to transfer electrons derived from NADH and succinate to molecular oxygen, creating an electrochemical gradient over the inner membrane that drives transmembrane transport and the ATP synthase. Cytochrome c oxidase is the component of the respiratory chain that catalyzes the reduction of oxygen to water. Electrons originating from reduced cytochrome c in the intermembrane space (IMS) are transferred via the dinuclear copper A center (CU(A)) of subunit 2 and heme A of subunit 1 to the active site in subunit 1, a binuclear center (BNC) formed by heme A3 and copper B (CU(B)). The BNC reduces molecular oxygen to 2 water molecules using 4 electrons from cytochrome c in the IMS and 4 protons from the mitochondrial matrix. The chain is Cytochrome c oxidase subunit 3 (MT-CO3) from Rhinoceros unicornis (Greater Indian rhinoceros).